The primary structure comprises 706 residues: Envelope glycoprotein H (706 aa).

An N-terminal signal peptide occupies residues Met1–Ala18. Over Ser19 to Leu682 the chain is Virion surface. Residue Asn60 is glycosylated (N-linked (GlcNAc...) asparagine; by host). Positions Asp165–Val229 are interaction with gL. Cys278 and Cys335 are oxidised to a cystine. Asn435 carries an N-linked (GlcNAc...) asparagine; by host glycan. Cystine bridges form between Cys454-Cys478 and Cys534-Cys587. Residues Asn549 and Asn604 are each glycosylated (N-linked (GlcNAc...) asparagine; by host). A disulfide bond links Cys612 and Cys615. Asn664 carries an N-linked (GlcNAc...) asparagine; by host glycan. Residues Ala683–Met703 form a helical membrane-spanning segment. Residues Phe704–Leu706 are Intravirion-facing.

Belongs to the herpesviridae glycoprotein H family. As to quaternary structure, interacts with glycoprotein L (gL); this interaction is necessary for the correct processing and cell surface expression of gH. The heterodimer gH/gL seems to interact with gB trimers during fusion. The heterodimer gH/gL interacts with host EPHA2 to facilitate virus internalization and fusion. Interacts with glycoprotein 42/BZLF2. Post-translationally, N-glycosylated, O-glycosylated, and sialylated.

Its subcellular location is the virion membrane. It is found in the host cell membrane. The protein localises to the host endosome membrane. The heterodimer glycoprotein H-glycoprotein L is required for the fusion of viral and plasma membranes leading to virus entry into the host cell. Following initial binding to host receptor, membrane fusion is mediated by the fusion machinery composed of gB and the heterodimer gH/gL. May also be involved in the fusion between the virion envelope and the outer nuclear membrane during virion morphogenesis. The heterodimer gH/gL targets also host EPHA2 to promote viral entry. In Homo sapiens (Human), this protein is Envelope glycoprotein H.